The primary structure comprises 1400 residues: DNA-directed RNA polymerase subunit beta' (1400 aa).

Residues Cys71, Cys73, Cys86, and Cys89 each contribute to the Zn(2+) site. Residues Asp462, Asp464, and Asp466 each coordinate Mg(2+). Positions 811, 885, 892, and 895 each coordinate Zn(2+).

It belongs to the RNA polymerase beta' chain family. The RNAP catalytic core consists of 2 alpha, 1 beta, 1 beta' and 1 omega subunit. When a sigma factor is associated with the core the holoenzyme is formed, which can initiate transcription. The cofactor is Mg(2+). Zn(2+) is required as a cofactor.

The catalysed reaction is RNA(n) + a ribonucleoside 5'-triphosphate = RNA(n+1) + diphosphate. In terms of biological role, DNA-dependent RNA polymerase catalyzes the transcription of DNA into RNA using the four ribonucleoside triphosphates as substrates. This chain is DNA-directed RNA polymerase subunit beta', found in Brucella abortus (strain S19).